We begin with the raw amino-acid sequence, 159 residues long: Nanos homolog 3 (159 aa).

Residues 42–87 (QEMQSDADSDEQAAALLESPSGPIRSRDSPEQNTSPGGGKPKSSPA) form a disordered region. A Nanos-type zinc finger spans residues 91–145 (FCSFCKHNGETEAVYTSHYLKNRDGDVMCPYLRQYKCPLCGATGAKAHTKRFCPM). The Zn(2+) site is built by Cys-92, Cys-95, His-108, Cys-119, Cys-127, Cys-130, His-138, and Cys-143. 2 consecutive short sequence motifs (C2HC) follow at residues 92 to 119 (CSFC…DVMC) and 127 to 143 (CPLC…KRFC). Residues 92 to 159 (CSFCKHNGET…YCSVYAKSTW (68 aa)) form an interaction with mylpfa region.

Belongs to the nanos family. Interacts (via C-terminus) with myosin mylpfa/mylz2; the interaction negatively regulates mylpfa phosphorylation. In terms of tissue distribution, in the embryo, displays early ubiquitous expression before being restricted to primordial germ cells in a 3'-UTR-dependent manner. Expressed in early stage germ cells in larval and adult ovaries.

It is found in the cytoplasm. The protein localises to the perinuclear region. In terms of biological role, RNA-binding protein which binds to RNA with no sequence specificity. Probably represses translation of specific mRNAs. Essential for the development of primordial germ cells (PGCs) by ensuring their proper migration and survival but is not required for PGC specification. Also required to maintain oocyte production in the adult ovary. Negatively regulates phosphorylation of myosin mylpfa/mylz2. In Danio rerio (Zebrafish), this protein is Nanos homolog 3.